The following is a 394-amino-acid chain: MNKKTIRDVDVRGKRVFCRVDFNVPMEQGAITDDTRIRAALPTIRYLIEHGAKVILASHLGRPKGKVVEELRLDAVAKRLGELLERPVAKTNEAVGDEVKAAVDRLNEGDVLLLENVRFYPGEEKNDPELAKAFAELADLYVNDAFGAAHRAHASTEGIAHYLPAVAGFLMEKELEVLGKALSNPDRPFTAIIGGAKVKDKIGVIDNLLEKVDNLIIGGGLAYTFVKALGHDVGKSLLEEDKIELAKSFMEKAKEKGVRFYMPVDVVVADRFANDANTKVVPIDAIPADWSALDIGPKTRELYRDVIRESKLVVWNGPMGVFEMDAFAHGTKAIAEALAEALDTYSVIGGGDSAAAVEKFGLADKMDHISTGGGASLEFMEGKQLPGVVALEDK.

Substrate is bound by residues 21–23 (DFN), Arg-36, 59–62 (HLGR), Arg-118, and Arg-151. Ser-183 bears the Phosphoserine mark. Residue Lys-201 coordinates ATP. Thr-299 is modified (phosphothreonine). Residues Asn-316, Glu-323, and 350–353 (GGDS) each bind ATP.

It belongs to the phosphoglycerate kinase family. As to quaternary structure, monomer.

The protein localises to the cytoplasm. The enzyme catalyses (2R)-3-phosphoglycerate + ATP = (2R)-3-phospho-glyceroyl phosphate + ADP. Its pathway is carbohydrate degradation; glycolysis; pyruvate from D-glyceraldehyde 3-phosphate: step 2/5. This Geobacillus stearothermophilus (Bacillus stearothermophilus) protein is Phosphoglycerate kinase.